We begin with the raw amino-acid sequence, 189 residues long: Peptidyl-tRNA hydrolase (189 aa).

Residue Y16 participates in tRNA binding. H21 acts as the Proton acceptor in catalysis. TRNA contacts are provided by F67, N69, and N115.

It belongs to the PTH family. As to quaternary structure, monomer.

Its subcellular location is the cytoplasm. It carries out the reaction an N-acyl-L-alpha-aminoacyl-tRNA + H2O = an N-acyl-L-amino acid + a tRNA + H(+). Hydrolyzes ribosome-free peptidyl-tRNAs (with 1 or more amino acids incorporated), which drop off the ribosome during protein synthesis, or as a result of ribosome stalling. Functionally, catalyzes the release of premature peptidyl moieties from peptidyl-tRNA molecules trapped in stalled 50S ribosomal subunits, and thus maintains levels of free tRNAs and 50S ribosomes. The sequence is that of Peptidyl-tRNA hydrolase from Legionella pneumophila (strain Lens).